Consider the following 257-residue polypeptide: Ribosomal RNA small subunit methyltransferase J (257 aa).

Residues 107-108 (RD), 123-124 (ER), and D177 contribute to the S-adenosyl-L-methionine site.

Belongs to the methyltransferase superfamily. RsmJ family.

Its subcellular location is the cytoplasm. The catalysed reaction is guanosine(1516) in 16S rRNA + S-adenosyl-L-methionine = N(2)-methylguanosine(1516) in 16S rRNA + S-adenosyl-L-homocysteine + H(+). Its function is as follows. Specifically methylates the guanosine in position 1516 of 16S rRNA. The sequence is that of Ribosomal RNA small subunit methyltransferase J from Haemophilus influenzae (strain 86-028NP).